We begin with the raw amino-acid sequence, 859 residues long: DNA mismatch repair protein MutS (859 aa).

An ATP-binding site is contributed by G617–S624. The disordered stretch occupies residues E799–S821.

It belongs to the DNA mismatch repair MutS family.

Its function is as follows. This protein is involved in the repair of mismatches in DNA. It is possible that it carries out the mismatch recognition step. This protein has a weak ATPase activity. The sequence is that of DNA mismatch repair protein MutS from Pseudomonas syringae pv. syringae (strain B728a).